The primary structure comprises 648 residues: Glutenin, high molecular weight subunit DY10 (648 aa).

The first 21 residues, 1-21 (MAKRLVLFAAVVIALVALTTA), serve as a signal peptide directing secretion. The interval 127–648 (YYPGVTSPRQ…EGGDALSASQ (522 aa)) is disordered. Low complexity-rich tracts occupy residues 141-166 (PGQA…QGQQ), 195-236 (QQPG…WQQG), and 243-263 (QQLG…GQQG). Positions 264–274 (HYPTSLQQPGQ) are enriched in polar residues. 5 stretches are compositionally biased toward low complexity: residues 284 to 353 (QQQP…GQQG), 360 to 416 (QQPG…GQQG), 459 to 502 (QQPG…PGQG), 510 to 523 (QGYY…PGQG), and 531 to 565 (QGHC…GQQG). A compositionally biased stretch (gly residues) spans 578-592 (QQSGQGQQSGQGHQP). The segment covering 593–604 (GQGQQSGQEQQG) has biased composition (low complexity).

Belongs to the gliadin/glutenin family. As to quaternary structure, disulfide-bridge linked aggregates.

In terms of biological role, glutenins are high-molecular weight seed storage proteins of wheat endosperm. Thought to be responsible for the visco-elastic property of wheat dough. The sequence is that of Glutenin, high molecular weight subunit DY10 (GLU-D1-2B) from Triticum aestivum (Wheat).